The chain runs to 299 residues: GTPase Era (299 aa).

The 171-residue stretch at 5 to 175 (RSGFVCFVGR…TNVLVSQLPP (171 aa)) folds into the Era-type G domain. Residues 13-20 (GRPNTGKS) are G1. 13–20 (GRPNTGKS) contacts GTP. A G2 region spans residues 39 to 43 (QTTRH). Residues 60–63 (DTPG) are G3. GTP contacts are provided by residues 60 to 64 (DTPGL) and 124 to 127 (TKID). The segment at 124–127 (TKID) is G4. Residues 154 to 156 (VSA) are G5. Positions 206 to 285 (VRDELPHSLA…YLDLRVKIAK (80 aa)) constitute a KH type-2 domain.

Belongs to the TRAFAC class TrmE-Era-EngA-EngB-Septin-like GTPase superfamily. Era GTPase family. In terms of assembly, monomer. Stays in the monomer conformation, irrespective of the presence of GTP.

It localises to the cell envelope. The protein resides in the secreted. It is found in the cell wall. Its activity is regulated as follows. Co-purified with RNA upon overexpression in E.coli, but RNAs do not appear to influence the GTPase activity. Exhibits GTPase activity. Binds RNA but is probably not involved in ribosome assembly in mycobacteria. Cannot use ATP. The protein is GTPase Era of Mycolicibacterium smegmatis (strain ATCC 700084 / mc(2)155) (Mycobacterium smegmatis).